Consider the following 207-residue polypeptide: MTLPDFRLIRLLPLASLVLTACTLPGHEGPGKSPDSPQWRQHQQEVRHLNQYQTRGAFAYISDDQKVYARFFWQQTGQDRYRLLLTNPLGSTELELNAQPGNVQLVDNKGQRYTADDAEEMIGKLTGMPIPLNSLRQWILGLPGDATDYKLDDQYRLSEVNYRQDGKNWKVVYGGYDSKTQPAMPANMELSDGSQRIKLKMDNWIVK.

A signal peptide spans 1-21 (MTLPDFRLIRLLPLASLVLTA). Cys22 carries N-palmitoyl cysteine lipidation. Cys22 is lipidated: S-diacylglycerol cysteine.

The protein belongs to the LolB family. As to quaternary structure, monomer.

The protein localises to the cell outer membrane. In terms of biological role, plays a critical role in the incorporation of lipoproteins in the outer membrane after they are released by the LolA protein. This is Outer-membrane lipoprotein LolB from Salmonella schwarzengrund (strain CVM19633).